A 142-amino-acid polypeptide reads, in one-letter code: Large ribosomal subunit protein uL16 (142 aa).

A compositionally biased stretch (basic residues) spans 1 to 14 (MLSPRRTKFRKQQR). A disordered region spans residues 1–22 (MLSPRRTKFRKQQRGRMTGKAT).

This sequence belongs to the universal ribosomal protein uL16 family. In terms of assembly, part of the 50S ribosomal subunit.

Its function is as follows. Binds 23S rRNA and is also seen to make contacts with the A and possibly P site tRNAs. The sequence is that of Large ribosomal subunit protein uL16 from Synechococcus elongatus (strain ATCC 33912 / PCC 7942 / FACHB-805) (Anacystis nidulans R2).